A 435-amino-acid chain; its full sequence is ATP-dependent protease ATPase subunit HslU (435 aa).

ATP is bound by residues valine 18, 60-65, aspartate 248, glutamate 313, and arginine 385; that span reads GVGKTE.

It belongs to the ClpX chaperone family. HslU subfamily. In terms of assembly, a double ring-shaped homohexamer of HslV is capped on each side by a ring-shaped HslU homohexamer. The assembly of the HslU/HslV complex is dependent on binding of ATP.

Its subcellular location is the cytoplasm. Functionally, ATPase subunit of a proteasome-like degradation complex; this subunit has chaperone activity. The binding of ATP and its subsequent hydrolysis by HslU are essential for unfolding of protein substrates subsequently hydrolyzed by HslV. HslU recognizes the N-terminal part of its protein substrates and unfolds these before they are guided to HslV for hydrolysis. The sequence is that of ATP-dependent protease ATPase subunit HslU from Xanthobacter autotrophicus (strain ATCC BAA-1158 / Py2).